Here is a 312-residue protein sequence, read N- to C-terminus: HPr kinase/phosphorylase (312 aa).

Active-site residues include H139 and K160. 154–161 (GSSGVGKS) contributes to the ATP binding site. S161 contacts Mg(2+). The active-site Proton acceptor; for phosphorylation activity. Proton donor; for dephosphorylation activity is the D178. The tract at residues 202–211 (LEIRGLGIIN) is important for the catalytic mechanism of both phosphorylation and dephosphorylation. Position 203 (E203) interacts with Mg(2+). The active site involves R244. Residues 265 to 270 (PVRPGR) form an important for the catalytic mechanism of dephosphorylation region.

This sequence belongs to the HPrK/P family. In terms of assembly, homohexamer. The cofactor is Mg(2+).

It catalyses the reaction [HPr protein]-L-serine + ATP = [HPr protein]-O-phospho-L-serine + ADP + H(+). It carries out the reaction [HPr protein]-O-phospho-L-serine + phosphate + H(+) = [HPr protein]-L-serine + diphosphate. Catalyzes the ATP- as well as the pyrophosphate-dependent phosphorylation of a specific serine residue in HPr, a phosphocarrier protein of the phosphoenolpyruvate-dependent sugar phosphotransferase system (PTS). HprK/P also catalyzes the pyrophosphate-producing, inorganic phosphate-dependent dephosphorylation (phosphorolysis) of seryl-phosphorylated HPr (P-Ser-HPr). The two antagonistic activities of HprK/P are regulated by several intracellular metabolites, which change their concentration in response to the absence or presence of rapidly metabolisable carbon sources (glucose, fructose, etc.) in the growth medium. Therefore, by controlling the phosphorylation state of HPr, HPrK/P is a sensor enzyme that plays a major role in the regulation of carbon metabolism and sugar transport: it mediates carbon catabolite repression (CCR), and regulates PTS-catalyzed carbohydrate uptake and inducer exclusion. In Listeria welshimeri serovar 6b (strain ATCC 35897 / DSM 20650 / CCUG 15529 / CIP 8149 / NCTC 11857 / SLCC 5334 / V8), this protein is HPr kinase/phosphorylase.